Reading from the N-terminus, the 290-residue chain is Ribosomal RNA small subunit methyltransferase A (290 aa).

Asparagine 27, leucine 29, glycine 54, glutamate 75, aspartate 100, and asparagine 125 together coordinate S-adenosyl-L-methionine.

Belongs to the class I-like SAM-binding methyltransferase superfamily. rRNA adenine N(6)-methyltransferase family. RsmA subfamily.

It is found in the cytoplasm. It carries out the reaction adenosine(1518)/adenosine(1519) in 16S rRNA + 4 S-adenosyl-L-methionine = N(6)-dimethyladenosine(1518)/N(6)-dimethyladenosine(1519) in 16S rRNA + 4 S-adenosyl-L-homocysteine + 4 H(+). In terms of biological role, specifically dimethylates two adjacent adenosines (A1518 and A1519) in the loop of a conserved hairpin near the 3'-end of 16S rRNA in the 30S particle. May play a critical role in biogenesis of 30S subunits. This chain is Ribosomal RNA small subunit methyltransferase A, found in Streptococcus pneumoniae (strain CGSP14).